The following is a 169-amino-acid chain: Thaumatin-like pathogenesis-related protein 2 (169 aa).

Positions 1-21 are cleaved as a signal peptide; that stretch reads MATSSAVLFFLLAVFAAGASA.

It belongs to the thaumatin family.

Its function is as follows. Associated with resistance against stem rust fungi. This Avena sativa (Oat) protein is Thaumatin-like pathogenesis-related protein 2 (RASTL-2).